A 312-amino-acid chain; its full sequence is Ribonuclease Z (312 aa).

Positions 63, 65, 67, 68, 140, 211, and 269 each coordinate Zn(2+). The active-site Proton acceptor is the aspartate 67.

This sequence belongs to the RNase Z family. As to quaternary structure, homodimer. Zn(2+) serves as cofactor.

It catalyses the reaction Endonucleolytic cleavage of RNA, removing extra 3' nucleotides from tRNA precursor, generating 3' termini of tRNAs. A 3'-hydroxy group is left at the tRNA terminus and a 5'-phosphoryl group is left at the trailer molecule.. In terms of biological role, zinc phosphodiesterase, which displays some tRNA 3'-processing endonuclease activity. Probably involved in tRNA maturation, by removing a 3'-trailer from precursor tRNA. The sequence is that of Ribonuclease Z from Shouchella clausii (strain KSM-K16) (Alkalihalobacillus clausii).